We begin with the raw amino-acid sequence, 1312 residues long: MSKIEKMSIQGVRSFGIEDKNKQVIQFFTPLTVLVGPNGAGKTTIIECLKYITTGDFPPGSKGKTFVHDPKVAHETDVRAQIRLQLKDVNGELVAVQRSMICTQKGKSTEFKTLEGVITRIKHGEKVSLSTKCAEMDKEMISALGVSAAVLNNVIFCHQEDSNWPLSEGRQLKVKFDEIFSATRYIKALETLKKVRTQQAHNVREYQVEIKYLKQNKEKAREIQDNLQSKEKQLAVSKENVKSIESQLEPLKDRLADIQRNLSKVMRLDNEIKALESRKRTMEQDNQDLEEKMEKVFQGTDEELNGMYQNHQRSVREKERKLNDQQREMDRACKESQRLNREKGELLVQQGRLQLEADHHQQYIKTRDSLIKSLAAQLELDGFERTPFNQRQTSNFQMLVKERQEKDEAHANQILREFSEREAMKQRQLDEMRDKKTGLERTIELKSSTQSKKHTDLKNVKYELQQLEGSSDRLQELDEELQKTERELENVEKSCNLEALRGEVLQLQNQKSELDRNVRKLDQEMEQMNTHTMTRTQMDMLKKDKADKDEQIRKIKSRHNDELSLLLGYFPNKKQLEDWLYSKRKDINQTRDKLARLTKELVAAEQNKNHLSNELRRKEEQSASFEEKVFDVCGSQDFDSDLSRLQDDIEKTSKQRAMLAGATAVYTQFITTLTEENQPCCPVCQRIFPSEAELQDVINDMQSKLRLVPDKLKSAEGELKRKEKRKDDMMELKPMRQMLADLKEKEIPEIRNKLVTINREIQRLKNDVDEQETLIATFASEEESAKACLQDISLMERYQMELRDVERKIAQYATKLQGVDLNRTVQQVSQEKQEKQHNLDNVSGKIELLRKRIQDQQEQVQQLKSAVNELTAEKLHISSNLQRRQQLEDQNVELTTELQCLAREIKEAREQLFPLESTLQKLQQEKQELLQRKESSYREAQEKVNDIKEKVKKINLLTKDIEKYSQDGKEEFKEQKESELQELIGRLNECEKLKEKVNREMVTIRQDIDTQKIQERCLQDNLTLRKRIEELKRVEEERHQLLKEMGQMKVVQMKNEYQELENKSESLKTNHSLALGRQKGFEDEILRFKKELRESQYKEAEEKYREKMIVMRTTELAIKDLDIYYKTLDQAIMKYHSIKMEEINKIVRDLWRSTYRSQDIEYIEIQSDADESVTAADKRRTYNYRVVMIKGDTALDMRGRCSAGQKVLASLIIRLALAETFCLNCGILALDEPTTNLDRENIESLAHALVEIIKSRSRQRNFQLIVITHDEDFVELLGRSEYVEHFYRIKKNIDQCSEIIRCSVNSLASYVH.

ATP is bound by residues R13, N38, G39, G41, K42, T43, T44, V67, D69, and Q159. Position 43 (T43) interacts with Mg(2+). A Mg(2+)-binding site is contributed by Q159. Coiled coils occupy residues 203-342, 415-558, and 587-628; these read VREY…LNRE, LREF…IKSR, and INQT…FEEK. A Zinc-hook domain is found at 635 to 734; it reads SQDFDSDLSR…RKDDMMELKP (100 aa). C681 and C684 together coordinate Zn(2+). Positions 712 to 1070 form a coiled coil; the sequence is LKSAEGELKR…ENKSESLKTN (359 aa).

It belongs to the SMC family. RAD50 subfamily. Component of the MRN complex composed of two heterodimers RAD50 and MRE11 associated with a single NBN. Zn(2+) serves as cofactor.

Its subcellular location is the nucleus. It localises to the chromosome. The protein localises to the telomere. It carries out the reaction ATP + H2O = ADP + phosphate + H(+). Its function is as follows. Component of the MRN complex, which plays a central role in double-strand break (DSB) repair, DNA recombination, maintenance of telomere integrity and meiosis. The MRN complex is involved in the repair of DNA double-strand breaks (DSBs) via homologous recombination (HR), an error-free mechanism which primarily occurs during S and G2 phases. The complex (1) mediates the end resection of damaged DNA, which generates proper single-stranded DNA, a key initial steps in HR, and is (2) required for the recruitment of other repair factors and efficient activation of ATM and ATR upon DNA damage. The MRN complex possesses single-strand endonuclease activity and double-strand-specific 3'-5' exonuclease activity, which are provided by mre11, to initiate end resection, which is required for single-strand invasion and recombination. Within the complex, rad50 is both required to bind DNA ends and hold them in close proximity and regulate the activity of MRE11. Rad50 provides an ATP-dependent control of MRE11 by positioning DNA ends into the mre11 active site: ATP-binding induces a large structural change from an open form with accessible MRE11 nuclease sites into a closed form. The MRN complex is also required for DNA damage signaling via activation of the atm and atr kinases: the nuclease activity of mre11 is not required to activate ATM and ATR. The MRN complex promotes recruitment of topbp1 to DNA damage sites. The MRN complex and rbbp8/CtIP are also required for chromosome alignment during metaphase. This chain is DNA repair protein RAD50.L, found in Xenopus laevis (African clawed frog).